Consider the following 345-residue polypeptide: MADFFSTGPGIAVLIIAQCLAVLGFVMVSLLFLVYGDRKIWAAVQMRRGPNVVGAFGLLQTVADALKYVVKEVVVPAGADKPVFMLAPMTSFVLAMIAWAVIPFNDGWVLADINVAILYVFAVSSLEVYGVIMGGWASNSKYPFLGSLRSAAQMISYEVSIGLIIIGVILSTGSMNFSAIVAAQDGDFGFFSWYWLPHLPMVFLFFISALAETNRPPFDLPEAESELVAGYQVEYSSTPFLLFMAGEYIAIFLMCALITLLFFGGWLSPIPFLPDGPIWMVGKMAFFFFLFAMVKAIVPRYRYDQLMRLGWKVFLPFSLAWVVFVAFAAQFELFGGAYARWAIGG.

8 helical membrane-spanning segments follow: residues 13–33, 84–104, 115–135, 161–181, 190–210, 248–268, 278–298, and 309–329; these read VLIIAQCLAVLGFVMVSLLFL, FMLAPMTSFVLAMIAWAVIPF, VAILYVFAVSSLEVYGVIMGG, IGLIIIGVILSTGSMNFSAIV, FFSWYWLPHLPMVFLFFISAL, YIAIFLMCALITLLFFGGWLS, IWMVGKMAFFFFLFAMVKAIV, and LGWKVFLPFSLAWVVFVAFAA.

It belongs to the complex I subunit 1 family. In terms of assembly, NDH-1 is composed of 14 different subunits. Subunits NuoA, H, J, K, L, M, N constitute the membrane sector of the complex.

The protein localises to the cell inner membrane. It catalyses the reaction a quinone + NADH + 5 H(+)(in) = a quinol + NAD(+) + 4 H(+)(out). NDH-1 shuttles electrons from NADH, via FMN and iron-sulfur (Fe-S) centers, to quinones in the respiratory chain. The immediate electron acceptor for the enzyme in this species is believed to be ubiquinone. Couples the redox reaction to proton translocation (for every two electrons transferred, four hydrogen ions are translocated across the cytoplasmic membrane), and thus conserves the redox energy in a proton gradient. This subunit may bind ubiquinone. The chain is NADH-quinone oxidoreductase subunit H from Dinoroseobacter shibae (strain DSM 16493 / NCIMB 14021 / DFL 12).